Here is a 294-residue protein sequence, read N- to C-terminus: Cytidine deaminase (294 aa).

2 CMP/dCMP-type deaminase domains span residues 48–168 and 186–294; these read DEDA…FGPK and LTGD…VLLA. Residue 89–91 participates in substrate binding; the sequence is NME. Histidine 102 serves as a coordination point for Zn(2+). Glutamate 104 serves as the catalytic Proton donor. The Zn(2+) site is built by cysteine 129 and cysteine 132.

Belongs to the cytidine and deoxycytidylate deaminase family. In terms of assembly, homodimer. Requires Zn(2+) as cofactor.

It carries out the reaction cytidine + H2O + H(+) = uridine + NH4(+). It catalyses the reaction 2'-deoxycytidine + H2O + H(+) = 2'-deoxyuridine + NH4(+). Its function is as follows. This enzyme scavenges exogenous and endogenous cytidine and 2'-deoxycytidine for UMP synthesis. The polypeptide is Cytidine deaminase (Shigella dysenteriae serotype 1 (strain Sd197)).